We begin with the raw amino-acid sequence, 181 residues long: 6,7-dimethyl-8-ribityllumazine synthase (181 aa).

5-amino-6-(D-ribitylamino)uracil is bound by residues Tyr27, 58–60, and 87–89; these read ALE and CVI. 92–93 lines the (2S)-2-hydroxy-3-oxobutyl phosphate pocket; sequence ET. Residue His95 is the Proton donor of the active site. Asn120 is a 5-amino-6-(D-ribitylamino)uracil binding site. Arg134 serves as a coordination point for (2S)-2-hydroxy-3-oxobutyl phosphate.

This sequence belongs to the DMRL synthase family.

The catalysed reaction is (2S)-2-hydroxy-3-oxobutyl phosphate + 5-amino-6-(D-ribitylamino)uracil = 6,7-dimethyl-8-(1-D-ribityl)lumazine + phosphate + 2 H2O + H(+). It functions in the pathway cofactor biosynthesis; riboflavin biosynthesis; riboflavin from 2-hydroxy-3-oxobutyl phosphate and 5-amino-6-(D-ribitylamino)uracil: step 1/2. Functionally, catalyzes the formation of 6,7-dimethyl-8-ribityllumazine by condensation of 5-amino-6-(D-ribitylamino)uracil with 3,4-dihydroxy-2-butanone 4-phosphate. This is the penultimate step in the biosynthesis of riboflavin. In Methylobacterium nodulans (strain LMG 21967 / CNCM I-2342 / ORS 2060), this protein is 6,7-dimethyl-8-ribityllumazine synthase.